The primary structure comprises 304 residues: Methionyl-tRNA formyltransferase (304 aa).

110-113 (SLLP) lines the (6S)-5,6,7,8-tetrahydrofolate pocket.

It belongs to the Fmt family.

It catalyses the reaction L-methionyl-tRNA(fMet) + (6R)-10-formyltetrahydrofolate = N-formyl-L-methionyl-tRNA(fMet) + (6S)-5,6,7,8-tetrahydrofolate + H(+). Attaches a formyl group to the free amino group of methionyl-tRNA(fMet). The formyl group appears to play a dual role in the initiator identity of N-formylmethionyl-tRNA by promoting its recognition by IF2 and preventing the misappropriation of this tRNA by the elongation apparatus. This chain is Methionyl-tRNA formyltransferase, found in Sulfurovum sp. (strain NBC37-1).